We begin with the raw amino-acid sequence, 60 residues long: MANKLKITLTKSTIGALPKHKLTVSALGLGKLHSTNEVPDNVAIRGMLKQVKHLVMVEEI.

The protein belongs to the universal ribosomal protein uL30 family. As to quaternary structure, part of the 50S ribosomal subunit.

This Lachnoclostridium phytofermentans (strain ATCC 700394 / DSM 18823 / ISDg) (Clostridium phytofermentans) protein is Large ribosomal subunit protein uL30.